A 204-amino-acid chain; its full sequence is Holliday junction resolvase RecU (204 aa).

The tract at residues 1-24 is disordered; it reads MTIHYPNGQQPVQHYNTHNELPTP. Residues 7 to 24 are compositionally biased toward polar residues; the sequence is NGQQPVQHYNTHNELPTP. The Mg(2+) site is built by threonine 87, aspartate 89, aspartate 102, and glutamine 121.

This sequence belongs to the RecU family. Mg(2+) serves as cofactor.

The protein localises to the cytoplasm. The catalysed reaction is Endonucleolytic cleavage at a junction such as a reciprocal single-stranded crossover between two homologous DNA duplexes (Holliday junction).. Functionally, endonuclease that resolves Holliday junction intermediates in genetic recombination. Cleaves mobile four-strand junctions by introducing symmetrical nicks in paired strands. Promotes annealing of linear ssDNA with homologous dsDNA. Required for DNA repair, homologous recombination and chromosome segregation. This chain is Holliday junction resolvase RecU, found in Limosilactobacillus reuteri (strain DSM 20016) (Lactobacillus reuteri).